Here is a 138-residue protein sequence, read N- to C-terminus: Histone H2B (138 aa).

Over residues 1-10 the composition is skewed to basic and acidic residues; the sequence is MPPKAAEKKP. The interval 1-47 is disordered; sequence MPPKAAEKKPSTAGKAPAGKAPEKKEAGKKTTAAGGEKKKRSKTRKE. An N6-acetyllysine; alternate mark is found at Lys-8 and Lys-9. Residues Lys-8 and Lys-9 each participate in a glycyl lysine isopeptide (Lys-Gly) (interchain with G-Cter in SUMO); alternate cross-link. Positions 11–20 are enriched in low complexity; that stretch reads STAGKAPAGK. Lys-15 bears the N6-acetyllysine mark. Lys-24 is modified (N6-acetyllysine; alternate). Lys-24 is covalently cross-linked (Glycyl lysine isopeptide (Lys-Gly) (interchain with G-Cter in SUMO); alternate). Lys-25 participates in a covalent cross-link: Glycyl lysine isopeptide (Lys-Gly) (interchain with G-Cter in SUMO). Residue Lys-132 forms a Glycyl lysine isopeptide (Lys-Gly) (interchain with G-Cter in ubiquitin) linkage.

Belongs to the histone H2B family. As to quaternary structure, the nucleosome is a histone octamer containing two molecules each of H2A, H2B, H3 and H4 assembled in one H3-H4 heterotetramer and two H2A-H2B heterodimers. The octamer wraps approximately 147 bp of DNA. In terms of processing, monoubiquitinated to form H2BK123ub1. H2BK123ub1 gives a specific tag for epigenetic transcriptional activation and is also prerequisite for H3K4me and H3K79me formation. H2BK123ub1 also modulates the formation of double-strand breaks during meiosis and is a prerequisite for DNA-damage checkpoint activation. Acetylated by GCN5 to form H2BK11ac and H2BK16ac. H2BK16ac can also be formed by ESA1. Acetylation of N-terminal lysines and particularly formation of H2BK11acK16ac has a positive effect on transcription. Post-translationally, sumoylation to form H2BK6su or H2BK7su, and probably also H2BK16su or H2BK17su, occurs preferentially near the telomeres and represses gene transcription.

It localises to the nucleus. Its subcellular location is the chromosome. Functionally, core component of nucleosome. Nucleosomes wrap and compact DNA into chromatin, limiting DNA accessibility to the cellular machineries which require DNA as a template. Histones thereby play a central role in transcription regulation, DNA repair, DNA replication and chromosomal stability. DNA accessibility is regulated via a complex set of post-translational modifications of histones, also called histone code, and nucleosome remodeling. In Ajellomyces capsulatus (Darling's disease fungus), this protein is Histone H2B (HTB1).